The following is a 962-amino-acid chain: Protease 3 (962 aa).

Residues 1-23 (MPRSTWFKALLLFVALWAPLSQA) form the signal peptide. His-88 lines the Zn(2+) pocket. Catalysis depends on Glu-91, which acts as the Proton acceptor. Positions 92 and 169 each coordinate Zn(2+).

It belongs to the peptidase M16 family. As to quaternary structure, monomer. The cofactor is Zn(2+).

It localises to the periplasm. It carries out the reaction Preferential cleavage of 16-Tyr-|-Leu-17 and 25-Phe-|-Tyr-26 bonds of oxidized insulin B chain. Also acts on other substrates of Mw less than 7 kDa such as insulin and glucagon.. In terms of biological role, endopeptidase that degrades small peptides of less than 7 kDa, such as glucagon and insulin. In Shigella flexneri, this protein is Protease 3 (ptrA).